The following is a 283-amino-acid chain: Formamidopyrimidine-DNA glycosylase (283 aa).

The Schiff-base intermediate with DNA role is filled by P2. E3 acts as the Proton donor in catalysis. K58 acts as the Proton donor; for beta-elimination activity in catalysis. The DNA site is built by H100, R119, and R162. The FPG-type zinc finger occupies 247–283 (DVYGREGAPCKGEGCTGQIKRIVQSGRSSFYCAQCQR). R273 (proton donor; for delta-elimination activity) is an active-site residue.

Belongs to the FPG family. Monomer. Zn(2+) is required as a cofactor.

The catalysed reaction is Hydrolysis of DNA containing ring-opened 7-methylguanine residues, releasing 2,6-diamino-4-hydroxy-5-(N-methyl)formamidopyrimidine.. It carries out the reaction 2'-deoxyribonucleotide-(2'-deoxyribose 5'-phosphate)-2'-deoxyribonucleotide-DNA = a 3'-end 2'-deoxyribonucleotide-(2,3-dehydro-2,3-deoxyribose 5'-phosphate)-DNA + a 5'-end 5'-phospho-2'-deoxyribonucleoside-DNA + H(+). Involved in base excision repair of DNA damaged by oxidation or by mutagenic agents. Acts as a DNA glycosylase that recognizes and removes damaged bases. Has a preference for oxidized purines, such as 7,8-dihydro-8-oxoguanine (8-oxoG). Has AP (apurinic/apyrimidinic) lyase activity and introduces nicks in the DNA strand. Cleaves the DNA backbone by beta-delta elimination to generate a single-strand break at the site of the removed base with both 3'- and 5'-phosphates. This chain is Formamidopyrimidine-DNA glycosylase, found in Roseobacter denitrificans (strain ATCC 33942 / OCh 114) (Erythrobacter sp. (strain OCh 114)).